The chain runs to 87 residues: Small ribosomal subunit protein uS17 (87 aa).

Belongs to the universal ribosomal protein uS17 family. As to quaternary structure, part of the 30S ribosomal subunit.

Its function is as follows. One of the primary rRNA binding proteins, it binds specifically to the 5'-end of 16S ribosomal RNA. The polypeptide is Small ribosomal subunit protein uS17 (Bacillus cereus (strain ATCC 14579 / DSM 31 / CCUG 7414 / JCM 2152 / NBRC 15305 / NCIMB 9373 / NCTC 2599 / NRRL B-3711)).